The chain runs to 437 residues: Elongator complex protein 4 (437 aa).

The segment at 179-247 is disordered; that stretch reads FSKSSSPTTP…TKTGSQDSPL (69 aa). The span at 181–192 shows a compositional bias: polar residues; sequence KSSSPTTPSLEQ. Ser183 is modified (phosphoserine). Positions 220–237 are enriched in low complexity; the sequence is SANNNNNNNNNSSSVTSS. Position 242 is a phosphoserine (Ser242).

It belongs to the ELP4 family. Component of the elongator complex composed of Elp1, Elp2, Elp3, Elp4, Elp5 and Elp6. The elongator complex associates with and stabilizes microtubules; efficient interaction requires the full complex.

Its subcellular location is the cytoplasm. It localises to the nucleus. It is found in the cytoskeleton. The protein localises to the spindle. It participates in tRNA modification; 5-methoxycarbonylmethyl-2-thiouridine-tRNA biosynthesis. Its function is as follows. Component of the elongator complex, which is required for multiple tRNA modifications, including mcm5U (5-methoxycarbonylmethyl uridine), mcm5s2U (5-methoxycarbonylmethyl-2-thiouridine), and ncm5U (5-carbamoylmethyl uridine). The elongator complex catalyzes the formation of carboxymethyluridine in the wobble base at position 34 in tRNAs. Binding by the elongator complex stabilizes microtubules and promotes their growth. This induces central spindle asymmetry, promoting polarized signaling endosome trafficking during asymmetric cell division and cell fate assignation of sensory organ precursor cells. In Drosophila melanogaster (Fruit fly), this protein is Elongator complex protein 4.